We begin with the raw amino-acid sequence, 664 residues long: 26S rRNA (cytosine-C(5))-methyltransferase nsun-1 (664 aa).

The disordered stretch occupies residues 1 to 105 (MAIVKKKKVS…DDSDAGDHLP (105 aa)). Residues 38 to 52 (PKKKKLVKKVKKSAK) show a composition bias toward basic residues. Residues 53-68 (KAHEEEPIEQVEKLQL) are compositionally biased toward basic and acidic residues. Residues 84-99 (SDDEDLRDDYSDDDSD) are compositionally biased toward acidic residues. Residues 313–319 (CSAPGGK), aspartate 337, and aspartate 382 contribute to the S-adenosyl-L-methionine site. Cysteine 439 serves as the catalytic Nucleophile. The tract at residues 513–664 (KMSKQGVMEK…RRKKMLAKQQ (152 aa)) is disordered. A compositionally biased stretch (basic and acidic residues) spans 519-528 (VMEKEKEKAA). Residues 541 to 550 (EASESSDDEE) show a composition bias toward acidic residues. Residues 563-572 (KPAKKQQQKK) are compositionally biased toward basic residues. Residues 606–618 (KAAEKQAAVKEDD) show a composition bias toward basic and acidic residues. 2 stretches are compositionally biased toward basic residues: residues 627–644 (KRAK…KRAA) and 652–664 (VKNR…AKQQ).

This sequence belongs to the class I-like SAM-binding methyltransferase superfamily. RsmB/NOP family.

Its subcellular location is the nucleus. It localises to the nucleolus. The catalysed reaction is a cytidine in 26S rRNA + S-adenosyl-L-methionine = a 5-methylcytidine in 26S rRNA + S-adenosyl-L-homocysteine + H(+). Its function is as follows. Methyltransferase which methylates the carbon-5 position of cytosine 2982 to 5-methylcytosine (m5C2982) in 26S rRNA. May play a role in the translation of leucine and proline codons. May be required for the translation of specific mRNAs such as mRNAs involved in gonad development, collagen production and cuticle integrity. Plays a role in ensuring the correct localization of the germline-specific protein gld-1 during development. Not required for pre-rRNA processing, the production of mature 5S, 5.8S, 18S or 26S rRNAs or global translation. Plays a role in positively regulating fertility. The polypeptide is 26S rRNA (cytosine-C(5))-methyltransferase nsun-1 (Caenorhabditis elegans).